We begin with the raw amino-acid sequence, 185 residues long: Probable E3 ubiquitin-protein ligase ATL44 (185 aa).

The helical transmembrane segment at 29–49 (VVILSALLCALICVAGLAAVV) threads the bilayer. An RING-type; atypical zinc finger spans residues 102–144 (CAICLTDFADGEEIRVLPLCGHSFHVECIDKWLVSRSSCPSCR). The disordered stretch occupies residues 163–185 (MKDQAHRHQHHQHSSTTIPTFLP). Over residues 176–185 (SSTTIPTFLP) the composition is skewed to polar residues.

It belongs to the RING-type zinc finger family. ATL subfamily. In terms of assembly, interacts with BIK1. Auto-monoubiquitination. As to expression, expressed in stems, flowers and green siliques.

The protein localises to the membrane. The enzyme catalyses S-ubiquitinyl-[E2 ubiquitin-conjugating enzyme]-L-cysteine + [acceptor protein]-L-lysine = [E2 ubiquitin-conjugating enzyme]-L-cysteine + N(6)-ubiquitinyl-[acceptor protein]-L-lysine.. It participates in protein modification; protein ubiquitination. In terms of biological role, E3 ubiquitin-protein ligase that possess E3 ubiquitin ligase activity in vitro and mediates protein monoubiquitination. Triggers the monoubiquitination of phosphorylated BIK1 in response to pathogen-associated molecular pattern (PAMP) detection. This Arabidopsis thaliana (Mouse-ear cress) protein is Probable E3 ubiquitin-protein ligase ATL44.